Reading from the N-terminus, the 435-residue chain is rRNA methyltransferase 3A, mitochondrial (435 aa).

The transit peptide at 1–42 (MAALMYNVSRGLVMLGERSLFQRERYQILVNSRRFLRGLRRR) directs the protein to the mitochondrion. A compositionally biased stretch (polar residues) spans 314-324 (KQLVSGQTENV). The interval 314–351 (KQLVSGQTENVSSDDYSESDSDDDDDEEEDEDSLPHVK) is disordered. Residues 328–345 (DYSESDSDDDDDEEEDED) show a composition bias toward acidic residues. Residues Gly369 and Leu402 each contribute to the S-adenosyl-L-methionine site.

The protein belongs to the class IV-like SAM-binding methyltransferase superfamily. RNA methyltransferase TrmH family.

The protein localises to the mitochondrion. It carries out the reaction a uridine in rRNA + S-adenosyl-L-methionine = a 2'-O-methyluridine in rRNA + S-adenosyl-L-homocysteine + H(+). Its function is as follows. S-adenosyl-L-methionine-dependent 2'-O-ribose methyltransferase that catalyzes the formation of 2'-O-methylguanosine at position 1485 (Gm1485) in the mitochondrial large subunit ribosomal RNA (mtLSU rRNA), a conserved modification in the peptidyl transferase domain of the mtLSU rRNA. Also required for formation of 2'-O-methyluridine at position 1484 (Um1484) mediated by MRM2. This chain is rRNA methyltransferase 3A, mitochondrial (mrm3a), found in Danio rerio (Zebrafish).